Reading from the N-terminus, the 91-residue chain is Small ribosomal subunit protein uS17 (91 aa).

It belongs to the universal ribosomal protein uS17 family. In terms of assembly, part of the 30S ribosomal subunit.

Functionally, one of the primary rRNA binding proteins, it binds specifically to the 5'-end of 16S ribosomal RNA. The sequence is that of Small ribosomal subunit protein uS17 from Thermobifida fusca (strain YX).